The chain runs to 516 residues: ADP-ribosylation factor GTPase-activating protein 3 (516 aa).

Residues 10 to 126 (LTIFKRLRSV…IKSLASQATR (117 aa)) enclose the Arf-GAP domain. Residues 25–48 (CFDCGAKNPSWASITYGVFLCIDC) form a C4-type zinc finger. Residues 170-199 (AEPSSLTSRPAETTLENNEGGQEQGPCVEG) form a disordered region. A compositionally biased stretch (polar residues) spans 173–190 (SSLTSRPAETTLENNEGG). Ser-231 bears the Phosphoserine mark. Residues 243-264 (NEIEKQAQAADKMKEQEDLAKA) are a coiled coil. Residues Ser-270, Ser-274, Ser-331, and Ser-370 each carry the phosphoserine modification. Positions 393–417 (TTGYSDRPTARHKPDYEPVENTDEA) are disordered. Phosphoserine occurs at positions 428, 451, 453, 455, 457, and 458.

The protein localises to the cytoplasm. It is found in the golgi apparatus membrane. Its activity is regulated as follows. GAP activity stimulated by phosphatidylinositol 4,5-bisphosphate (PIP2). Its function is as follows. GTPase-activating protein (GAP) for ADP ribosylation factor 1 (ARF1). Hydrolysis of ARF1-bound GTP may lead to dissociation of coatomer from Golgi-derived membranes to allow fusion with target membranes. The sequence is that of ADP-ribosylation factor GTPase-activating protein 3 from Pongo abelii (Sumatran orangutan).